Consider the following 157-residue polypeptide: N5-carboxyaminoimidazole ribonucleotide mutase (157 aa).

Substrate is bound by residues S8, D11, and R38.

The protein belongs to the AIR carboxylase family. Class I subfamily.

The enzyme catalyses 5-carboxyamino-1-(5-phospho-D-ribosyl)imidazole + H(+) = 5-amino-1-(5-phospho-D-ribosyl)imidazole-4-carboxylate. The protein operates within purine metabolism; IMP biosynthesis via de novo pathway; 5-amino-1-(5-phospho-D-ribosyl)imidazole-4-carboxylate from 5-amino-1-(5-phospho-D-ribosyl)imidazole (N5-CAIR route): step 2/2. Catalyzes the conversion of N5-carboxyaminoimidazole ribonucleotide (N5-CAIR) to 4-carboxy-5-aminoimidazole ribonucleotide (CAIR). In Methanocaldococcus jannaschii (strain ATCC 43067 / DSM 2661 / JAL-1 / JCM 10045 / NBRC 100440) (Methanococcus jannaschii), this protein is N5-carboxyaminoimidazole ribonucleotide mutase.